A 130-amino-acid chain; its full sequence is Protein ApaG (130 aa).

Residues 3 to 127 (KAETRGISVI…FSLDVPHMRR (125 aa)) form the ApaG domain.

The chain is Protein ApaG from Methylobacterium nodulans (strain LMG 21967 / CNCM I-2342 / ORS 2060).